Reading from the N-terminus, the 343-residue chain is Uroporphyrinogen decarboxylase (343 aa).

Residues 25 to 29 (RQAGR), Phe44, Asp75, Tyr150, Ser205, and His320 contribute to the substrate site.

Belongs to the uroporphyrinogen decarboxylase family. In terms of assembly, homodimer.

The protein resides in the cytoplasm. The enzyme catalyses uroporphyrinogen III + 4 H(+) = coproporphyrinogen III + 4 CO2. It functions in the pathway porphyrin-containing compound metabolism; protoporphyrin-IX biosynthesis; coproporphyrinogen-III from 5-aminolevulinate: step 4/4. Catalyzes the decarboxylation of four acetate groups of uroporphyrinogen-III to yield coproporphyrinogen-III. This Mesorhizobium japonicum (strain LMG 29417 / CECT 9101 / MAFF 303099) (Mesorhizobium loti (strain MAFF 303099)) protein is Uroporphyrinogen decarboxylase.